Reading from the N-terminus, the 384-residue chain is tRNA-dihydrouridine(20) synthase [NAD(P)+] (384 aa).

Residues 12 to 14 (PMV) and Gln88 each bind FMN. Cys117 (proton donor) is an active-site residue. FMN contacts are provided by residues Lys160, His188, 222–224 (NGA), and 249–250 (AE). Residues 359 to 384 (KQKRKQTDHIGSDTKKQKVVPLPTDI) are disordered. Over residues 363–374 (KQTDHIGSDTKK) the composition is skewed to basic and acidic residues.

Belongs to the Dus family. Dus2 subfamily. As to quaternary structure, monomer. FMN is required as a cofactor. In terms of processing, N-glycosylated.

The protein resides in the cytoplasm. Its subcellular location is the nucleus. It carries out the reaction 5,6-dihydrouridine(20) in tRNA + NADP(+) = uridine(20) in tRNA + NADPH + H(+). The catalysed reaction is 5,6-dihydrouridine(20) in tRNA + NAD(+) = uridine(20) in tRNA + NADH + H(+). The enzyme catalyses a 5,6-dihydrouridine in mRNA + NAD(+) = a uridine in mRNA + NADH + H(+). It catalyses the reaction a 5,6-dihydrouridine in mRNA + NADP(+) = a uridine in mRNA + NADPH + H(+). Catalyzes the NADPH-dependent synthesis of dihydrouridine, a modified base found in the D-loop of most tRNAs. Specifically modifies U20 in cytoplasmic tRNAs. Also able to mediate dihydrouridylation of some mRNAs, thereby affecting their translation. The chain is tRNA-dihydrouridine(20) synthase [NAD(P)+] (SMM1) from Saccharomyces cerevisiae (strain ATCC 204508 / S288c) (Baker's yeast).